A 379-amino-acid polypeptide reads, in one-letter code: UDP-4-amino-4-deoxy-L-arabinose--oxoglutarate aminotransferase (379 aa).

At Lys-182 the chain carries N6-(pyridoxal phosphate)lysine.

This sequence belongs to the DegT/DnrJ/EryC1 family. ArnB subfamily. Homodimer. Pyridoxal 5'-phosphate is required as a cofactor.

It carries out the reaction UDP-4-amino-4-deoxy-beta-L-arabinose + 2-oxoglutarate = UDP-beta-L-threo-pentopyranos-4-ulose + L-glutamate. The protein operates within nucleotide-sugar biosynthesis; UDP-4-deoxy-4-formamido-beta-L-arabinose biosynthesis; UDP-4-deoxy-4-formamido-beta-L-arabinose from UDP-alpha-D-glucuronate: step 2/3. It participates in bacterial outer membrane biogenesis; lipopolysaccharide biosynthesis. Catalyzes the conversion of UDP-4-keto-arabinose (UDP-Ara4O) to UDP-4-amino-4-deoxy-L-arabinose (UDP-L-Ara4N). The modified arabinose is attached to lipid A and is required for resistance to polymyxin and cationic antimicrobial peptides. This is UDP-4-amino-4-deoxy-L-arabinose--oxoglutarate aminotransferase from Salmonella dublin (strain CT_02021853).